The chain runs to 202 residues: Polyamine-modulated factor 1 (202 aa).

The span at 1-15 (MAEVSRDSEAAERGP) shows a compositional bias: basic and acidic residues. Positions 1-26 (MAEVSRDSEAAERGPEGSSPEAVPGD) are disordered. A coiled-coil region spans residues 153–194 (EAKNQELADAVLAGRRQVEELQQQVRALQQTWQALHREQREL).

As to quaternary structure, component of the MIS12 complex composed of MIS12, DSN1, NSL1 and PMF1. Interacts with COPS7A. Interacts via its coiled-coil domain with the leucine-zipper domain of NFE2L2. The interaction with NFE2L2 is required for the transcriptional regulation of SSAT.

The protein resides in the nucleus. It is found in the chromosome. It localises to the centromere. Its subcellular location is the kinetochore. Functionally, part of the MIS12 complex which is required for normal chromosome alignment and segregation and for kinetochore formation during mitosis. May act as a cotranscription partner of NFE2L2 involved in regulation of polyamine-induced transcription of SSAT. This is Polyamine-modulated factor 1 from Mus musculus (Mouse).